Reading from the N-terminus, the 112-residue chain is MPEIPEGDYESGKKVFKQRCLQCHVVDSKATKTGPTLHGIIGRKSGAVPGFDYSTANKNKGVVWTRETLFEYLLNPKKYIPGTKMVFAGLKKADERADLIKYIEEECKKPIS.

4 residues coordinate heme c: cysteine 20, cysteine 23, histidine 24, and methionine 85.

Binds 1 heme c group covalently per subunit.

The protein resides in the mitochondrion intermembrane space. Functionally, electron carrier between complex III (ubiquinol-cytochrome c oxireductase) and complex IV (cytochrome c oxidase). This chain is Cytochrome c type-1, found in Ascaris suum (Pig roundworm).